Reading from the N-terminus, the 242-residue chain is 1-(5-phosphoribosyl)-5-[(5-phosphoribosylamino)methylideneamino] imidazole-4-carboxamide isomerase (242 aa).

The Proton acceptor role is filled by D8. D130 (proton donor) is an active-site residue.

Belongs to the HisA/HisF family.

Its subcellular location is the cytoplasm. The enzyme catalyses 1-(5-phospho-beta-D-ribosyl)-5-[(5-phospho-beta-D-ribosylamino)methylideneamino]imidazole-4-carboxamide = 5-[(5-phospho-1-deoxy-D-ribulos-1-ylimino)methylamino]-1-(5-phospho-beta-D-ribosyl)imidazole-4-carboxamide. Its pathway is amino-acid biosynthesis; L-histidine biosynthesis; L-histidine from 5-phospho-alpha-D-ribose 1-diphosphate: step 4/9. In Thioalkalivibrio sulfidiphilus (strain HL-EbGR7), this protein is 1-(5-phosphoribosyl)-5-[(5-phosphoribosylamino)methylideneamino] imidazole-4-carboxamide isomerase.